A 489-amino-acid polypeptide reads, in one-letter code: Capsid protein (489 aa).

Positions 79 to 144 (GETSEEESDS…QPKTIPGQKQ (66 aa)) are disordered. A compositionally biased stretch (acidic residues) spans 81 to 94 (TSEEESDSGEEPEF). The segment covering 95 to 110 (EQVRMDRTGGTEIPKE) has biased composition (basic and acidic residues). Positions 122–125 (RKRK) match the Nuclear localization signal motif. Polar residues predominate over residues 135–144 (QPKTIPGQKQ). The CCHC-type zinc-finger motif lies at 412 to 429 (CRCWICNIEGHYANECPN). The disordered stretch occupies residues 467–489 (EEEEETSTEESDGSSTSEDSDSD).

This sequence belongs to the caulimoviridae capsid protein family. As to quaternary structure, interacts (via nuclear localization signal) with host importin alpha.

It localises to the virion. The protein resides in the host nucleus. Functionally, self assembles to form an icosahedral capsid, about 50 nm in diameter, nm, composed of 420 subunits of the viral capsid protein. The capsid encapsulates the genomic dsDNA. Following virus entry into host cell, provides nuclear import of the viral genome. Virus particles do not enter the nucleus, but dock at the nuclear membrane through the interaction with host importins. The polypeptide is Capsid protein (Arabidopsis thaliana (Mouse-ear cress)).